The following is a 481-amino-acid chain: Serralysin B (481 aa).

A propeptide spanning residues M1 to A15 is cleaved from the precursor. H189 contributes to the Zn(2+) binding site. E190 is an active-site residue. 2 residues coordinate Zn(2+): H193 and Y230. Ca(2+) contacts are provided by R267, G269, T271, D299, G301, G302, D304, T341, E343, G348, G350, D352, N357, A359, N361, G365, G366, A367, G368, D370, G374, G377, D379, G383, G384, A385, G386, D388, D397, D404, and D414. Hemolysin-type calcium-binding repeat units lie at residues I346–L363, Q364–L381, and T382–T399.

This sequence belongs to the peptidase M10B family. Ca(2+) is required as a cofactor. It depends on Zn(2+) as a cofactor.

It is found in the secreted. It catalyses the reaction Preferential cleavage of bonds with hydrophobic residues in P1'.. The polypeptide is Serralysin B (prtB) (Dickeya chrysanthemi (Pectobacterium chrysanthemi)).